Reading from the N-terminus, the 173-residue chain is Lens fiber membrane intrinsic protein (173 aa).

Residues 1-3 are Cytoplasmic-facing; sequence MYS. Residues 4-24 traverse the membrane as a helical segment; the sequence is FMGGGLFCAWVGTILLVVATA. The Extracellular segment spans residues 25–66; it reads TDHWMQYRLSGSFAHQGLWRYCLGNKCFLQTESIAYWNATRA. Tryptophan 43 and tryptophan 61 each carry a C-linked (Man) tryptophan glycan. Residue asparagine 62 is glycosylated (N-linked (GlcNAc...) asparagine). The helical transmembrane segment at 67-87 threads the bilayer; the sequence is FMILSALCATSGIIMGVLAFA. The Cytoplasmic segment spans residues 88–98; the sequence is QQSTFTRLSRP. The chain crosses the membrane as a helical span at residues 99-119; it reads FSAGIMFFASTLFVLLALAIY. Topologically, residues 120–140 are extracellular; it reads TGVTVSFLGRRFGDWRFSWSY. A helical transmembrane segment spans residues 141–161; that stretch reads ILGWVALLMTFFAGIFYMCAY. Residues 162–173 lie on the Cytoplasmic side of the membrane; sequence RMHECRRLATPR. Phosphothreonine is present on threonine 171.

The protein belongs to the PMP-22/EMP/MP20 family. As to quaternary structure, seems to be associated with itself or another lens membrane component via disulfide bonds.

It localises to the membrane. Functionally, present in the thicker 16-17 nm junctions of mammalian lens fiber cells, where it may contribute to cell junctional organization. Acts as a receptor for calmodulin. May play an important role in both lens development and cataractogenesis. The polypeptide is Lens fiber membrane intrinsic protein (Lim2) (Mus musculus (Mouse)).